The following is a 172-amino-acid chain: Adenine phosphoribosyltransferase (172 aa).

Belongs to the purine/pyrimidine phosphoribosyltransferase family. In terms of assembly, homodimer.

The protein resides in the cytoplasm. It catalyses the reaction AMP + diphosphate = 5-phospho-alpha-D-ribose 1-diphosphate + adenine. The protein operates within purine metabolism; AMP biosynthesis via salvage pathway; AMP from adenine: step 1/1. Its function is as follows. Catalyzes a salvage reaction resulting in the formation of AMP, that is energically less costly than de novo synthesis. The polypeptide is Adenine phosphoribosyltransferase (Prochlorococcus marinus (strain MIT 9215)).